A 142-amino-acid polypeptide reads, in one-letter code: 3-hydroxyacyl-[acyl-carrier-protein] dehydratase FabZ (142 aa).

H48 is an active-site residue.

It belongs to the thioester dehydratase family. FabZ subfamily.

The protein localises to the cytoplasm. The enzyme catalyses a (3R)-hydroxyacyl-[ACP] = a (2E)-enoyl-[ACP] + H2O. Functionally, involved in unsaturated fatty acids biosynthesis. Catalyzes the dehydration of short chain beta-hydroxyacyl-ACPs and long chain saturated and unsaturated beta-hydroxyacyl-ACPs. In Desulforamulus reducens (strain ATCC BAA-1160 / DSM 100696 / MI-1) (Desulfotomaculum reducens), this protein is 3-hydroxyacyl-[acyl-carrier-protein] dehydratase FabZ.